Consider the following 326-residue polypeptide: Inactive peptidyl-prolyl cis-trans isomerase FKBP6 (326 aa).

Residues 53-142 enclose the PPIase FKBP-type domain; it reads DASVLVKYSG…LFEIELLDFL (90 aa). 3 TPR repeats span residues 170–203, 218–251, and 252–285; these read AATE…LHRR, LLVF…DRKN, and AKAL…QPFN.

Belongs to the FKBP6 family. As to quaternary structure, interacts with HSP72/HSPA2 and CLTC. Interacts with GAPDH; leading to inhibit GAPDH catalytic activity. Interacts (via TPR repeats) with HSP90.

The protein resides in the cytoplasm. The protein localises to the cytosol. Its subcellular location is the nucleus. In terms of biological role, co-chaperone required during spermatogenesis to repress transposable elements and prevent their mobilization, which is essential for the germline integrity. Acts via the piRNA metabolic process, which mediates the repression of transposable elements during meiosis by forming complexes composed of piRNAs and Piwi proteins and govern the methylation and subsequent repression of transposons. Acts as a co-chaperone via its interaction with HSP90 and is required for the piRNA amplification process, the secondary piRNA biogenesis. May be required together with HSP90 in removal of 16 nucleotide ping-pong by-products from Piwi complexes, possibly facilitating turnover of Piwi complexes. The chain is Inactive peptidyl-prolyl cis-trans isomerase FKBP6 (FKBP6) from Bos taurus (Bovine).